Here is a 286-residue protein sequence, read N- to C-terminus: Phosphatidylserine decarboxylase proenzyme (286 aa).

Residues aspartate 90, histidine 147, and serine 252 each act as charge relay system; for autoendoproteolytic cleavage activity in the active site. Catalysis depends on serine 252, which acts as the Schiff-base intermediate with substrate; via pyruvic acid; for decarboxylase activity. Serine 252 carries the post-translational modification Pyruvic acid (Ser); by autocatalysis.

This sequence belongs to the phosphatidylserine decarboxylase family. PSD-B subfamily. Prokaryotic type I sub-subfamily. As to quaternary structure, heterodimer of a large membrane-associated beta subunit and a small pyruvoyl-containing alpha subunit. Pyruvate is required as a cofactor. Post-translationally, is synthesized initially as an inactive proenzyme. Formation of the active enzyme involves a self-maturation process in which the active site pyruvoyl group is generated from an internal serine residue via an autocatalytic post-translational modification. Two non-identical subunits are generated from the proenzyme in this reaction, and the pyruvate is formed at the N-terminus of the alpha chain, which is derived from the carboxyl end of the proenzyme. The autoendoproteolytic cleavage occurs by a canonical serine protease mechanism, in which the side chain hydroxyl group of the serine supplies its oxygen atom to form the C-terminus of the beta chain, while the remainder of the serine residue undergoes an oxidative deamination to produce ammonia and the pyruvoyl prosthetic group on the alpha chain. During this reaction, the Ser that is part of the protease active site of the proenzyme becomes the pyruvoyl prosthetic group, which constitutes an essential element of the active site of the mature decarboxylase.

The protein localises to the cell membrane. The catalysed reaction is a 1,2-diacyl-sn-glycero-3-phospho-L-serine + H(+) = a 1,2-diacyl-sn-glycero-3-phosphoethanolamine + CO2. It participates in phospholipid metabolism; phosphatidylethanolamine biosynthesis; phosphatidylethanolamine from CDP-diacylglycerol: step 2/2. In terms of biological role, catalyzes the formation of phosphatidylethanolamine (PtdEtn) from phosphatidylserine (PtdSer). The chain is Phosphatidylserine decarboxylase proenzyme from Pseudomonas fluorescens (strain Pf0-1).